The sequence spans 166 residues: Cytochrome b (166 aa).

A run of 4 helical transmembrane segments spans residues 15 to 35 (FKDI…VLIN), 77 to 97 (LGGV…PFYN), 109 to 129 (INQI…WIGA), and 136 to 156 (YVLL…INPL).

The protein belongs to the cytochrome b family. In terms of assembly, the main subunits of complex b-c1 are: cytochrome b, cytochrome c1 and the Rieske protein. Heme is required as a cofactor.

It localises to the mitochondrion inner membrane. Its function is as follows. Component of the ubiquinol-cytochrome c reductase complex (complex III or cytochrome b-c1 complex) that is part of the mitochondrial respiratory chain. The b-c1 complex mediates electron transfer from ubiquinol to cytochrome c. Contributes to the generation of a proton gradient across the mitochondrial membrane that is then used for ATP synthesis. In Drosophila subobscura (Fruit fly), this protein is Cytochrome b (mt:Cyt-b).